A 526-amino-acid chain; its full sequence is Na(+)/H(+) antiporter NhaB (526 aa).

Transmembrane regions (helical) follow at residues Ile-25–Trp-45, Ile-52–Ile-72, Ile-89–Met-109, Ala-139–Met-159, Leu-204–Pro-224, Phe-240–Phe-260, Gly-305–Ile-325, Phe-355–Phe-375, Leu-391–Gly-411, Val-448–Leu-468, and Met-479–Leu-499.

It belongs to the NhaB Na(+)/H(+) (TC 2.A.34) antiporter family.

Its subcellular location is the cell inner membrane. It carries out the reaction 2 Na(+)(in) + 3 H(+)(out) = 2 Na(+)(out) + 3 H(+)(in). Functionally, na(+)/H(+) antiporter that extrudes sodium in exchange for external protons. The polypeptide is Na(+)/H(+) antiporter NhaB (Pseudoalteromonas atlantica (strain T6c / ATCC BAA-1087)).